The chain runs to 2201 residues: Voltage-dependent T-type calcium channel subunit alpha-1I (2201 aa).

Residues 1–45 (MADSNLPPSSAAAPAPEPGITEQPGPRSPPPSPPGLEEPLEGTNP) form a disordered region. Residues 1–76 (MADSNLPPSS…RNWCIKMVCN (76 aa)) lie on the Cytoplasmic side of the membrane. A compositionally biased stretch (pro residues) spans 26–36 (PRSPPPSPPGL). An I repeat occupies 64 to 399 (TSPRNWCIKM…LCLVVIATQF (336 aa)). A helical transmembrane segment spans residues 77 to 97 (PWFECVSMLVILLNCVTLGMY). Topologically, residues 98–115 (QPCDDMECLSDRCKILQV) are extracellular. A helical membrane pass occupies residues 116 to 137 (FDDFIFIFFAMEMVLKMVALGI). The Cytoplasmic segment spans residues 138–146 (FGKKCYLGD). Residues 147–166 (TWNRLDFFIVMAGMVEYSLD) form a helical membrane-spanning segment. The Extracellular segment spans residues 167–171 (LQNIN). Residue asparagine 171 is glycosylated (N-linked (GlcNAc...) asparagine). The chain crosses the membrane as a helical span at residues 172–189 (LSAIRTVRVLRPLKAINR). Residues 190–209 (VPSMRILVNLLLDTLPMLGN) lie on the Cytoplasmic side of the membrane. The helical transmembrane segment at 210-230 (VLLLCFFVFFIFGIIGVQLWA) threads the bilayer. Residues 231 to 371 (GLLRNRCFLE…YYVMDAHSFY (141 aa)) lie on the Extracellular side of the membrane. N-linked (GlcNAc...) asparagine glycans are attached at residues asparagine 242 and asparagine 309. The chain crosses the membrane as a helical span at residues 372–396 (NFIYFILLIIVGSFFMINLCLVVIA). The Cytoplasmic portion of the chain corresponds to 397-598 (TQFSETKQRE…EKLRGIVDSK (202 aa)). Disordered stretches follow at residues 463–500 (QAMG…TPHT) and 513–579 (PSSC…AARL). Over residues 545–554 (SAEAEANGDG) the composition is skewed to low complexity. The II repeat unit spans residues 584 to 823 (WRETREKLRG…LLVAILVEGF (240 aa)). A helical transmembrane segment spans residues 599-619 (YFNRGIMMAILVNTVSMGIEH). Residues 620–632 (HEQPEELTNILEI) are Extracellular-facing. A helical transmembrane segment spans residues 633–654 (CNVVFTSMFALEMILKLAAFGL). Residues 655–660 (FDYLRN) are Cytoplasmic-facing. The chain crosses the membrane as a helical span at residues 661 to 679 (PYNIFDSIIVIISIWEIVG). Over 680 to 687 (QADGGLSV) the chain is Extracellular. A helical membrane pass occupies residues 688-711 (LRTFRLLRVLKLVRFMPALRRQLV). At 712–722 (VLMKTMDNVAT) the chain is on the cytoplasmic side. A helical membrane pass occupies residues 723–743 (FCMLLMLFIFIFSILGMHIFG). At 744-795 (CKFSLRTDTGDTVPDRKNFDSLLWAIVTVFQILTQEDWNVVLYNGMASTTPW) the chain is on the extracellular side. Residues 796 to 820 (ASLYFVALMTFGNYVLFNLLVAILV) form a helical membrane-spanning segment. Residues 821–1125 (EGFQAEGDAN…NKFRILCQTI (305 aa)) are Cytoplasmic-facing. A disordered region spans residues 936-969 (WGRSGTWASRRSSWNSLKHKPPSAEHESLLSGEG). Polar residues predominate over residues 941–951 (TWASRRSSWNS). Serine 1017 carries the post-translational modification Phosphoserine. The III repeat unit spans residues 1116–1393 (NKFRILCQTI…MFVGVVVENF (278 aa)). A helical transmembrane segment spans residues 1126-1148 (IAHKLFDYVVLAFIFLNCITIAL). Topologically, residues 1149–1166 (ERPQIEAGSTERIFLTVS) are extracellular. A helical transmembrane segment spans residues 1167–1187 (NYIFTAIFVGEMTLKVVSLGL). At 1188–1197 (YFGEQAYLRS) the chain is on the cytoplasmic side. A helical transmembrane segment spans residues 1198–1217 (SWNVLDGFLVFVSIIDIVVS). Over 1218-1231 (VASAGGAKILGVLR) the chain is Extracellular. Residues 1232–1253 (VLRLLRTLRPLRVISRAPGLKL) traverse the membrane as a helical segment. Residues 1254–1263 (VVETLISSLK) are Cytoplasmic-facing. The chain crosses the membrane as a helical span at residues 1264-1287 (PIGNIVLICCAFFIIFGILGVQLF). At 1288-1364 (KGKFYHCLGV…DQQPVTNHNP (77 aa)) the chain is on the extracellular side. Asparagine 1301 and asparagine 1304 each carry an N-linked (GlcNAc...) asparagine glycan. A helical membrane pass occupies residues 1365-1390 (WMLLYFISFLLIVSFFVLNMFVGVVV). The Cytoplasmic segment spans residues 1391 to 1445 (ENFHKCRQHQEAEEARRREEKRLRRLEKKRRKAQRLPYYATYCPTRLLIHSMCTS). One copy of the IV repeat lies at 1431–1692 (TYCPTRLLIH…VVVAVLMKHL (262 aa)). The helical transmembrane segment at 1446–1466 (HYLDIFITFIICLNVVTMSLE) threads the bilayer. Residues 1467–1480 (HYNQPTSLETALKY) are Extracellular-facing. The helical transmembrane segment at 1481-1502 (CNYMFTTVFVLEAVLKLVAFGL) threads the bilayer. The Cytoplasmic portion of the chain corresponds to 1503–1509 (RRFFKDR). A helical transmembrane segment spans residues 1510 to 1528 (WNQLDLAIVLLSVMGITLE). Over 1529–1542 (EIEINAALPINPTI) the chain is Extracellular. A helical membrane pass occupies residues 1543–1566 (IRIMRVLRIARVLKLLKMATGMRA). Residues 1567–1580 (LLDTVVQALPQVGN) are Cytoplasmic-facing. The helical transmembrane segment at 1581–1601 (LGLLFMLLFFIYAALGVELFG) threads the bilayer. Over 1602–1664 (KLVCNDENPC…RSCLSSLQFV (63 aa)) the chain is Extracellular. A helical transmembrane segment spans residues 1665–1692 (SPLYFVSFVLTAQFVLINVVVAVLMKHL). At 1693–1835 (DDSNKEAQED…EVQLAETEAF (143 aa)) the chain is on the cytoplasmic side. Disordered stretches follow at residues 1846–1876 (LLGD…PEPM), 1916–1938 (LKHD…PLLQ), 1992–2045 (SDTS…TRRR), 2057–2105 (RGLR…HSET), and 2126–2201 (LTPA…KRKR). The segment covering 1992-2007 (SDTSLDASPSSSAGSL) has biased composition (low complexity). Composition is skewed to polar residues over residues 2008-2019 (QTTLEDSLTLSD) and 2066-2075 (HSSGGSTSPG). Residues 2077-2090 (THHDSMDPSDEEGR) show a composition bias toward basic and acidic residues.

It belongs to the calcium channel alpha-1 subunit (TC 1.A.1.11) family. CACNA1I subfamily. Interacts with CATSPER1 and CATSPER2, leading to suppress T-type calcium channel activity. Post-translationally, in response to raising of intracellular calcium, the T-type channels are activated by CaM-kinase II. In terms of tissue distribution, brain.

It is found in the membrane. The enzyme catalyses Ca(2+)(in) = Ca(2+)(out). Functionally, voltage-sensitive calcium channels (VSCC) mediate the entry of calcium ions into excitable cells and are also involved in a variety of calcium-dependent processes, including muscle contraction, hormone or neurotransmitter release, gene expression, cell motility, cell division and cell death. This channel gives rise to T-type calcium currents. T-type calcium channels belong to the 'low-voltage activated (LVA)' group and are strongly blocked by nickel and mibefradil. A particularity of this type of channels is an opening at quite negative potentials, and a voltage-dependent inactivation. T-type channels serve pacemaking functions in both central neurons and cardiac nodal cells and support calcium signaling in secretory cells and vascular smooth muscle. They may also be involved in the modulation of firing patterns of neurons which is important for information processing as well as in cell growth processes. Gates in voltage ranges similar to, but higher than alpha 1G or alpha 1H. In terms of biological role, voltage-sensitive calcium channels (VSCC) mediate the entry of calcium ions into excitable cells and are also involved in a variety of calcium-dependent processes, including muscle contraction, hormone or neurotransmitter release, gene expression, cell motility, cell division and cell death. This channel gives rise to T-type calcium currents. This chain is Voltage-dependent T-type calcium channel subunit alpha-1I (Cacna1i), found in Rattus norvegicus (Rat).